The primary structure comprises 828 residues: Putative dual specificity tyrosine-phosphorylation-regulated kinase 3 homolog (828 aa).

Residues Met1–Leu14 are compositionally biased toward basic and acidic residues. A disordered region spans residues Met1–Asn26. Residues Thr17 to Asn26 are compositionally biased toward polar residues. The 314-residue stretch at Tyr276 to Leu589 folds into the Protein kinase domain. ATP is bound by residues Ile282–Val290 and Lys305. Asp402 (proton acceptor) is an active-site residue. Ser616 bears the Phosphoserine mark.

This sequence belongs to the protein kinase superfamily. CMGC Ser/Thr protein kinase family. MNB/DYRK subfamily. In terms of processing, autophosphorylated on tyrosine residues.

It catalyses the reaction L-seryl-[protein] + ATP = O-phospho-L-seryl-[protein] + ADP + H(+). It carries out the reaction L-threonyl-[protein] + ATP = O-phospho-L-threonyl-[protein] + ADP + H(+). The catalysed reaction is L-tyrosyl-[protein] + ATP = O-phospho-L-tyrosyl-[protein] + ADP + H(+). This Drosophila melanogaster (Fruit fly) protein is Putative dual specificity tyrosine-phosphorylation-regulated kinase 3 homolog (Dyrk3).